Here is a 248-residue protein sequence, read N- to C-terminus: Small ribosomal subunit protein uS2 (248 aa).

It belongs to the universal ribosomal protein uS2 family.

This is Small ribosomal subunit protein uS2 from Alkalilimnicola ehrlichii (strain ATCC BAA-1101 / DSM 17681 / MLHE-1).